Here is an 82-residue protein sequence, read N- to C-terminus: Progonadoliberin-3 (82 aa).

A signal peptide spans methionine 1–serine 23. Glutamine 24 is subject to Pyrrolidone carboxylic acid. Glycine 33 is subject to Glycine amide.

It belongs to the GnRH family. In terms of tissue distribution, brain.

It is found in the secreted. In terms of biological role, stimulates the secretion of gonadotropins. The chain is Progonadoliberin-3 (gnrh3) from Oncorhynchus nerka (Sockeye salmon).